Reading from the N-terminus, the 401-residue chain is Phosphonopyruvate decarboxylase (401 aa).

Positions 382–401 (WPASAVGSGTRAAAGSAGDR) are disordered. Over residues 384-401 (ASAVGSGTRAAAGSAGDR) the composition is skewed to low complexity.

This sequence belongs to the TPP enzyme family. Requires thiamine diphosphate as cofactor. Mg(2+) is required as a cofactor.

It carries out the reaction 3-phosphonopyruvate + H(+) = phosphonoacetaldehyde + CO2. The protein operates within secondary metabolite biosynthesis; bialaphos biosynthesis. Involved in the biosynthesis of phosphinothricin tripeptide (PTT), also known as bialaphos (BA), a natural-product antibiotic and potent herbicide. Catalyzes the decarboxylation of phosphonopyruvate (PnPy) to generate phosphonoacetaldehyde (PnAA). The chain is Phosphonopyruvate decarboxylase from Streptomyces hygroscopicus.